A 285-amino-acid polypeptide reads, in one-letter code: Glycine--tRNA ligase alpha subunit (285 aa).

This sequence belongs to the class-II aminoacyl-tRNA synthetase family. In terms of assembly, tetramer of two alpha and two beta subunits.

The protein localises to the cytoplasm. The catalysed reaction is tRNA(Gly) + glycine + ATP = glycyl-tRNA(Gly) + AMP + diphosphate. The protein is Glycine--tRNA ligase alpha subunit of Granulibacter bethesdensis (strain ATCC BAA-1260 / CGDNIH1).